The sequence spans 223 residues: Uracil-DNA glycosylase (223 aa).

Aspartate 67 (proton acceptor) is an active-site residue.

The protein belongs to the uracil-DNA glycosylase (UDG) superfamily. UNG family.

It localises to the cytoplasm. The catalysed reaction is Hydrolyzes single-stranded DNA or mismatched double-stranded DNA and polynucleotides, releasing free uracil.. Excises uracil residues from the DNA which can arise as a result of misincorporation of dUMP residues by DNA polymerase or due to deamination of cytosine. The protein is Uracil-DNA glycosylase of Borrelia hermsii (strain HS1 / DAH).